The sequence spans 500 residues: Protein O-glucosyltransferase 2 (500 aa).

A signal peptide spans 1–22; that stretch reads MLRKLLLLLMSCIIFLTRRSKA. One copy of the Filamin repeat lies at 23 to 128; the sequence is AAAASASKTL…LVGKSPYVLR (106 aa). N-linked (GlcNAc...) asparagine glycosylation is found at asparagine 60 and asparagine 259. The Prevents secretion from ER signature appears at 497–500; that stretch reads RDEL.

Belongs to the KDELC family.

The protein localises to the endoplasmic reticulum lumen. It carries out the reaction L-seryl-[EGF-like domain protein] + UDP-alpha-D-glucose = 3-O-(beta-D-glucosyl)-L-seryl-[EGF-like domain protein] + UDP + H(+). It catalyses the reaction L-seryl-[EGF-like domain protein] + UDP-alpha-D-xylose = 3-O-(beta-D-xylosyl)-L-seryl-[EGF-like domain protein] + UDP + H(+). It functions in the pathway protein modification; protein glycosylation. Protein glucosyltransferase that catalyzes the transfer of glucose from UDP-glucose to a serine residue within the consensus sequence peptide C-X-N-T-X-G-S-F-X-C. Can also catalyze the transfer of xylose from UDP-xylose but less efficiently. The polypeptide is Protein O-glucosyltransferase 2 (poglut2) (Danio rerio (Zebrafish)).